The sequence spans 384 residues: Putative 8-amino-7-oxononanoate synthase (384 aa).

Arginine 22 is a binding site for substrate. 109–110 (GY) is a binding site for pyridoxal 5'-phosphate. Histidine 134 lines the substrate pocket. Residues serine 182, 207 to 210 (DDAH), and 236 to 239 (TLSK) each bind pyridoxal 5'-phosphate. Lysine 239 carries the N6-(pyridoxal phosphate)lysine modification. Substrate is bound at residue threonine 348.

Belongs to the class-II pyridoxal-phosphate-dependent aminotransferase family. BioF subfamily. As to quaternary structure, homodimer. Requires pyridoxal 5'-phosphate as cofactor.

It catalyses the reaction 6-carboxyhexanoyl-[ACP] + L-alanine + H(+) = (8S)-8-amino-7-oxononanoate + holo-[ACP] + CO2. It participates in cofactor biosynthesis; biotin biosynthesis. Catalyzes the decarboxylative condensation of pimeloyl-[acyl-carrier protein] and L-alanine to produce 8-amino-7-oxononanoate (AON), [acyl-carrier protein], and carbon dioxide. The protein is Putative 8-amino-7-oxononanoate synthase (bioF) of Caulobacter vibrioides (strain ATCC 19089 / CIP 103742 / CB 15) (Caulobacter crescentus).